Consider the following 539-residue polypeptide: 2-isopropylmalate synthase (539 aa).

Residues 8–269 (VLIFDTTLRD…YFNPFFGRPP (262 aa)) enclose the Pyruvate carboxyltransferase domain. Residues aspartate 17, histidine 208, histidine 210, and asparagine 244 each contribute to the Mn(2+) site. Positions 408-539 (QLKLVQVSCG…DLAKVDKKGI (132 aa)) are regulatory domain.

It belongs to the alpha-IPM synthase/homocitrate synthase family. LeuA type 1 subfamily. Homodimer. Mn(2+) serves as cofactor.

It localises to the cytoplasm. The enzyme catalyses 3-methyl-2-oxobutanoate + acetyl-CoA + H2O = (2S)-2-isopropylmalate + CoA + H(+). Its pathway is amino-acid biosynthesis; L-leucine biosynthesis; L-leucine from 3-methyl-2-oxobutanoate: step 1/4. Its function is as follows. Catalyzes the condensation of the acetyl group of acetyl-CoA with 3-methyl-2-oxobutanoate (2-ketoisovalerate) to form 3-carboxy-3-hydroxy-4-methylpentanoate (2-isopropylmalate). This Prochlorococcus marinus (strain NATL1A) protein is 2-isopropylmalate synthase.